We begin with the raw amino-acid sequence, 177 residues long: Cytochrome c oxidase assembly protein CtaG (177 aa).

At 1–8 the chain is on the cytoplasmic side; the sequence is MTQKAKNT. Residues 9–29 form a helical; Signal-anchor for type II membrane protein membrane-spanning segment; that stretch reads IYLLILIILSMLCLVYASVPL. The Periplasmic portion of the chain corresponds to 30–177; it reads YSIFCKVTGY…TFFKYKETTK (148 aa).

The protein belongs to the COX11/CtaG family.

The protein resides in the cell inner membrane. Its function is as follows. Exerts its effect at some terminal stage of cytochrome c oxidase synthesis, probably by being involved in the insertion of the copper B into subunit I. The protein is Cytochrome c oxidase assembly protein CtaG of Ehrlichia ruminantium (strain Gardel).